A 771-amino-acid polypeptide reads, in one-letter code: Ribonucleoside-diphosphate reductase large subunit (771 aa).

Residues 1–92 (MFVIKRNGYK…ISNLHKETKK (92 aa)) enclose the ATP-cone domain. Residues 5–6 (KR), 11–17 (ENVMFDK), T53, D57, and K88 each bind ATP. Positions 202 and 217 each coordinate GDP. Residues 226-228 (DSI), K243, and R256 each bind dTTP. N427 is a GDP binding site. The active-site Proton acceptor is N427. The Cysteine radical intermediate role is filled by C429. GDP contacts are provided by residues E431 and 603–606 (TAST). E431 (proton acceptor) is an active-site residue.

The protein belongs to the ribonucleoside diphosphate reductase large chain family. As to quaternary structure, interacts with RNR2/OPG047 subunit. Mg(2+) serves as cofactor.

It carries out the reaction a 2'-deoxyribonucleoside 5'-diphosphate + [thioredoxin]-disulfide + H2O = a ribonucleoside 5'-diphosphate + [thioredoxin]-dithiol. Functionally, ribonucleoside-diphosphate reductase holoenzyme provides the precursors necessary for viral DNA synthesis. Allows virus growth in non-dividing cells. Catalyzes the biosynthesis of deoxyribonucleotides from the corresponding ribonucleotides. The sequence is that of Ribonucleoside-diphosphate reductase large subunit (OPG080) from Monkeypox virus.